The following is a 230-amino-acid chain: MSAVPDIPGGPAQRLAQACDALRLPADAGQQQKLLRYIEQMQRWNRTYNLTAIRDPGQMLVQHLFDSLSVVAPLERGLPAAGSGARVKLFDVGSGGGLPGVVLAIMRAHWDVTCVDAVEKKTAFVRQMAGALGLPNLQAAHTRIEQLEPAQCDVVISRAFASLQDFAKLAGRHVREGGTLVAMKGKVPDDEIQALQQHGHWTVERIEPLVVPALDAQRCLIWMRRSQGNI.

S-adenosyl-L-methionine contacts are provided by residues Gly93, Leu98, 144–145 (IE), and Arg158.

The protein belongs to the methyltransferase superfamily. RNA methyltransferase RsmG family.

The protein localises to the cytoplasm. It catalyses the reaction guanosine(527) in 16S rRNA + S-adenosyl-L-methionine = N(7)-methylguanosine(527) in 16S rRNA + S-adenosyl-L-homocysteine. Specifically methylates the N7 position of guanine in position 527 of 16S rRNA. This Bordetella parapertussis (strain 12822 / ATCC BAA-587 / NCTC 13253) protein is Ribosomal RNA small subunit methyltransferase G.